The following is a 576-amino-acid chain: Proline--tRNA ligase (576 aa).

This sequence belongs to the class-II aminoacyl-tRNA synthetase family. ProS type 1 subfamily. In terms of assembly, homodimer.

It localises to the cytoplasm. The catalysed reaction is tRNA(Pro) + L-proline + ATP = L-prolyl-tRNA(Pro) + AMP + diphosphate. In terms of biological role, catalyzes the attachment of proline to tRNA(Pro) in a two-step reaction: proline is first activated by ATP to form Pro-AMP and then transferred to the acceptor end of tRNA(Pro). As ProRS can inadvertently accommodate and process non-cognate amino acids such as alanine and cysteine, to avoid such errors it has two additional distinct editing activities against alanine. One activity is designated as 'pretransfer' editing and involves the tRNA(Pro)-independent hydrolysis of activated Ala-AMP. The other activity is designated 'posttransfer' editing and involves deacylation of mischarged Ala-tRNA(Pro). The misacylated Cys-tRNA(Pro) is not edited by ProRS. The polypeptide is Proline--tRNA ligase (Bordetella parapertussis (strain 12822 / ATCC BAA-587 / NCTC 13253)).